The chain runs to 703 residues: Fatty acid oxidation complex subunit alpha (703 aa).

Positions 1–190 (MSEQKAFSLN…KLGVVDACVP (190 aa)) are enoyl-CoA hydratase. Residues 308–703 (AAVKKVGVLG…TRAGEGRTFY (396 aa)) form a 3-hydroxyacyl-CoA dehydrogenase region.

In the N-terminal section; belongs to the enoyl-CoA hydratase/isomerase family. It in the central section; belongs to the 3-hydroxyacyl-CoA dehydrogenase family. In terms of assembly, heterotetramer of two alpha chains (FadJ) and two beta chains (FadI).

The protein localises to the cytoplasm. It catalyses the reaction a (3S)-3-hydroxyacyl-CoA = a (2E)-enoyl-CoA + H2O. It carries out the reaction a 4-saturated-(3S)-3-hydroxyacyl-CoA = a (3E)-enoyl-CoA + H2O. The enzyme catalyses a (3S)-3-hydroxyacyl-CoA + NAD(+) = a 3-oxoacyl-CoA + NADH + H(+). The catalysed reaction is (3S)-3-hydroxybutanoyl-CoA = (3R)-3-hydroxybutanoyl-CoA. The protein operates within lipid metabolism; fatty acid beta-oxidation. Functionally, catalyzes the formation of a hydroxyacyl-CoA by addition of water on enoyl-CoA. Also exhibits 3-hydroxyacyl-CoA epimerase and 3-hydroxyacyl-CoA dehydrogenase activities. This chain is Fatty acid oxidation complex subunit alpha, found in Vibrio parahaemolyticus serotype O3:K6 (strain RIMD 2210633).